Reading from the N-terminus, the 165-residue chain is uncharacterized protein (165 aa).

The protein belongs to the IIV-6 196R family.

This is an uncharacterized protein from Invertebrate iridescent virus 3 (IIV-3).